The following is a 324-amino-acid chain: uncharacterized protein (324 aa).

8 helical membrane-spanning segments follow: residues 4 to 24 (GNKVVISWIVSIGFVGMPEFM), 63 to 83 (AALLLEYGWVLLVLIGLEGIL), 106 to 128 (ALFYGLAGAFVLRFGSLFAISFL), 132 to 151 (WQVQAIGAIYLLYISASHLL), 179 to 199 (LADIAFAVDSILAAVALAVTL), 209 to 229 (GLDGGQFLVILAGGIIGLVIM), 246 to 266 (LETAAFVIVGWVGVKLALYTL), and 282 to 302 (GTWKLIFWGVLAAIAVCGWFM).

It belongs to the TerC family.

It localises to the cell membrane. This is an uncharacterized protein from Bacillus subtilis (strain 168).